A 211-amino-acid polypeptide reads, in one-letter code: Metalloproteinase inhibitor 3 (211 aa).

The N-terminal stretch at 1-23 (MTPWLGLVVLLSCWSLGHWGAEA) is a signal peptide. Zn(2+) is bound at residue C24. Involved in metalloproteinase-binding regions lie at residues 24–27 (CTCS) and 88–89 (ES). Cystine bridges form between C24–C91, C26–C118, C36–C143, C145–C192, C150–C155, and C163–C184. The NTR domain maps to 24 to 143 (CTCSPSHPQD…GLNYRYHLGC (120 aa)). Residues 105–188 (TGRVYEGKMY…SKHYACIRQK (84 aa)) are mediates interaction with EFEMP1.

It belongs to the protease inhibitor I35 (TIMP) family. Interacts with EFEMP1. Interacts with KDR. As to expression, highest levels are found in kidney, lung and brain followed by ovary and uterus. Low levels are found in bone.

Its subcellular location is the secreted. It is found in the extracellular space. The protein localises to the extracellular matrix. Functionally, mediates a variety of processes including matrix regulation and turnover, inflammation, and angiogenesis, through reversible inhibition of zinc protease superfamily enzymes, primarily matrix metalloproteinases (MMPs). Regulates extracellular matrix (ECM) remodeling through inhibition of matrix metalloproteinases (MMP) including MMP-1, MMP-2, MMP-3, MMP-7, MMP-9, MMP-13, MMP-14 and MMP-15. Additionally, modulates the processing of amyloid precursor protein (APP) and apolipoprotein E receptor ApoER2 by inhibiting two alpha-secretases ADAM10 and ADAM17. Functions as a tumor suppressor and a potent inhibitor of angiogenesis. Exerts its anti-angiogenic effect by directly interacting with vascular endothelial growth factor (VEGF) receptor-2/KDR, preventing its binding to the VEGFA ligand. Selectively induces apoptosis in angiogenic endothelial cells through a caspase-independent cell death pathway. Mechanistically, inhibits matrix-induced focal adhesion kinase PTK2 tyrosine phosphorylation and association with paxillin/PXN and disrupts the incorporation of ITGB3, PTK2 and PXN into focal adhesion contacts on the matrix. In Mus musculus (Mouse), this protein is Metalloproteinase inhibitor 3 (Timp3).